The sequence spans 341 residues: L-threonine 3-dehydrogenase (341 aa).

Residue Cys-38 coordinates Zn(2+). Catalysis depends on charge relay system residues Thr-40 and His-43. Zn(2+) contacts are provided by His-63, Glu-64, Cys-93, Cys-96, Cys-99, and Cys-107. NAD(+)-binding positions include Ile-175, Asp-195, Arg-200, 262 to 264 (LGI), and 286 to 287 (IY).

Belongs to the zinc-containing alcohol dehydrogenase family. Homotetramer. Requires Zn(2+) as cofactor.

It localises to the cytoplasm. The catalysed reaction is L-threonine + NAD(+) = (2S)-2-amino-3-oxobutanoate + NADH + H(+). It participates in amino-acid degradation; L-threonine degradation via oxydo-reductase pathway; glycine from L-threonine: step 1/2. Its function is as follows. Catalyzes the NAD(+)-dependent oxidation of L-threonine to 2-amino-3-ketobutyrate. This chain is L-threonine 3-dehydrogenase, found in Salmonella arizonae (strain ATCC BAA-731 / CDC346-86 / RSK2980).